A 124-amino-acid polypeptide reads, in one-letter code: Protein MGF 110-8L (124 aa).

Residues 1–16 (MKVLILVLLGVVILQA) form the signal peptide. An N-linked (GlcNAc...) asparagine; by host glycan is attached at Asn-76.

Belongs to the asfivirus MGF 110 family.

Plays a role in virus cell tropism, and may be required for efficient virus replication in macrophages. The polypeptide is Protein MGF 110-8L (African swine fever virus (isolate Pig/Kenya/KEN-50/1950) (ASFV)).